Reading from the N-terminus, the 559-residue chain is Cocaine esterase (559 aa).

The signal sequence occupies residues 1 to 26; it reads MRLHRLRARLSAVACGLLLLLVRGQG. Q27 is subject to Pyrrolidone carboxylic acid. A disulfide bond links C95 and C123. N-linked (GlcNAc...) asparagine glycosylation occurs at N111. Catalysis depends on S228, which acts as the Acyl-ester intermediate. The N-linked (GlcNAc...) asparagine glycan is linked to N276. Cysteines 280 and 291 form a disulfide. Residues E345 and H457 each act as charge relay system in the active site. The short motif at 556 to 559 is the Prevents secretion from ER element; it reads HTEL.

This sequence belongs to the type-B carboxylesterase/lipase family. As to quaternary structure, monomer. Glycosylated. Preferentially expressed in intestine with moderate expression in liver. Within the intestine, highest expression is found in small intestine with lower expression in colon and rectum.

It is found in the endoplasmic reticulum lumen. The catalysed reaction is cocaine + H2O = ecgonine methyl ester + benzoate + H(+). It catalyses the reaction a carboxylic ester + H2O = an alcohol + a carboxylate + H(+). The enzyme catalyses 4-methylumbelliferyl acetate + H2O = 4-methylumbelliferone + acetate + H(+). It carries out the reaction 2-(5Z,8Z,11Z,14Z-eicosatetraenoyl)-glycerol + H2O = glycerol + (5Z,8Z,11Z,14Z)-eicosatetraenoate + H(+). The catalysed reaction is prostaglandin E2 1-glyceryl ester + H2O = prostaglandin E2 + glycerol + H(+). It catalyses the reaction prostaglandin F2alpha 1-glyceryl ester + H2O = prostaglandin F2alpha + glycerol + H(+). Its function is as follows. Involved in the detoxification of xenobiotics and in the activation of ester and amide prodrugs. Shows high catalytic efficiency for hydrolysis of cocaine, 4-methylumbelliferyl acetate, heroin and 6-monoacetylmorphine. Hydrolyzes aspirin, substrates with large alcohol group and small acyl group and endogenous lipids such as triacylglycerol. Converts monoacylglycerides to free fatty acids and glycerol. Hydrolyzes of 2-arachidonoylglycerol and prostaglandins. The protein is Cocaine esterase of Homo sapiens (Human).